The following is a 383-amino-acid chain: Arginine biosynthesis bifunctional protein ArgJ (383 aa).

Substrate is bound by residues threonine 146, lysine 168, threonine 179, glutamate 259, asparagine 378, and serine 383. The active-site Nucleophile is the threonine 179.

Belongs to the ArgJ family. In terms of assembly, heterotetramer of two alpha and two beta chains.

It localises to the cytoplasm. The catalysed reaction is N(2)-acetyl-L-ornithine + L-glutamate = N-acetyl-L-glutamate + L-ornithine. It carries out the reaction L-glutamate + acetyl-CoA = N-acetyl-L-glutamate + CoA + H(+). It participates in amino-acid biosynthesis; L-arginine biosynthesis; L-ornithine and N-acetyl-L-glutamate from L-glutamate and N(2)-acetyl-L-ornithine (cyclic): step 1/1. Its pathway is amino-acid biosynthesis; L-arginine biosynthesis; N(2)-acetyl-L-ornithine from L-glutamate: step 1/4. Catalyzes two activities which are involved in the cyclic version of arginine biosynthesis: the synthesis of N-acetylglutamate from glutamate and acetyl-CoA as the acetyl donor, and of ornithine by transacetylation between N(2)-acetylornithine and glutamate. This Streptomyces avermitilis (strain ATCC 31267 / DSM 46492 / JCM 5070 / NBRC 14893 / NCIMB 12804 / NRRL 8165 / MA-4680) protein is Arginine biosynthesis bifunctional protein ArgJ.